A 433-amino-acid polypeptide reads, in one-letter code: 3-phosphoshikimate 1-carboxyvinyltransferase (433 aa).

3-phosphoshikimate contacts are provided by Lys21, Ser22, and Arg26. A phosphoenolpyruvate-binding site is contributed by Lys21. The phosphoenolpyruvate site is built by Gly92 and Arg120. 4 residues coordinate 3-phosphoshikimate: Ser166, Gln168, Asp317, and Lys344. Position 168 (Gln168) interacts with phosphoenolpyruvate. The Proton acceptor role is filled by Asp317. Positions 348 and 391 each coordinate phosphoenolpyruvate.

The protein belongs to the EPSP synthase family. As to quaternary structure, monomer.

It localises to the cytoplasm. It carries out the reaction 3-phosphoshikimate + phosphoenolpyruvate = 5-O-(1-carboxyvinyl)-3-phosphoshikimate + phosphate. It participates in metabolic intermediate biosynthesis; chorismate biosynthesis; chorismate from D-erythrose 4-phosphate and phosphoenolpyruvate: step 6/7. Functionally, catalyzes the transfer of the enolpyruvyl moiety of phosphoenolpyruvate (PEP) to the 5-hydroxyl of shikimate-3-phosphate (S3P) to produce enolpyruvyl shikimate-3-phosphate and inorganic phosphate. In Caldicellulosiruptor saccharolyticus (strain ATCC 43494 / DSM 8903 / Tp8T 6331), this protein is 3-phosphoshikimate 1-carboxyvinyltransferase.